Reading from the N-terminus, the 201-residue chain is Ribosome maturation factor RimP (201 aa).

The protein belongs to the RimP family.

It localises to the cytoplasm. Required for maturation of 30S ribosomal subunits. This is Ribosome maturation factor RimP from Acidobacterium capsulatum (strain ATCC 51196 / DSM 11244 / BCRC 80197 / JCM 7670 / NBRC 15755 / NCIMB 13165 / 161).